Consider the following 290-residue polypeptide: 33 kDa chaperonin (290 aa).

2 cysteine pairs are disulfide-bonded: cysteine 231/cysteine 233 and cysteine 263/cysteine 266.

Belongs to the HSP33 family. In terms of processing, under oxidizing conditions two disulfide bonds are formed involving the reactive cysteines. Under reducing conditions zinc is bound to the reactive cysteines and the protein is inactive.

It is found in the cytoplasm. Functionally, redox regulated molecular chaperone. Protects both thermally unfolding and oxidatively damaged proteins from irreversible aggregation. Plays an important role in the bacterial defense system toward oxidative stress. This chain is 33 kDa chaperonin, found in Thermotoga maritima (strain ATCC 43589 / DSM 3109 / JCM 10099 / NBRC 100826 / MSB8).